The sequence spans 289 residues: Serine/threonine-protein phosphatase Pgam5, mitochondrial (289 aa).

Residues 7 to 23 (FACGTGAGLAAYYLQKL) traverse the membrane as a helical segment.

The protein belongs to the phosphoglycerate mutase family. BPG-dependent PGAM subfamily. Interacts with Pk92B/ASK1.

It is found in the mitochondrion outer membrane. The catalysed reaction is O-phospho-L-seryl-[protein] + H2O = L-seryl-[protein] + phosphate. It carries out the reaction O-phospho-L-threonyl-[protein] + H2O = L-threonyl-[protein] + phosphate. Displays phosphatase activity for serine/threonine residues, and dephosphorylates and activates Pk92B kinase. Has apparently no phosphoglycerate mutase activity. The chain is Serine/threonine-protein phosphatase Pgam5, mitochondrial from Drosophila virilis (Fruit fly).